A 299-amino-acid chain; its full sequence is tRNA pseudouridine synthase B (299 aa).

The Nucleophile role is filled by aspartate 39.

It belongs to the pseudouridine synthase TruB family. Type 1 subfamily.

The enzyme catalyses uridine(55) in tRNA = pseudouridine(55) in tRNA. In terms of biological role, responsible for synthesis of pseudouridine from uracil-55 in the psi GC loop of transfer RNAs. The sequence is that of tRNA pseudouridine synthase B from Syntrophomonas wolfei subsp. wolfei (strain DSM 2245B / Goettingen).